The chain runs to 371 residues: COP9 signalosome complex subunit 5 (371 aa).

The 138-residue stretch at 51-188 (VKISAVALIK…IGAFRTYPEG (138 aa)) folds into the MPN domain. Zn(2+) contacts are provided by histidine 134, histidine 136, and aspartate 147. A JAMM motif motif is present at residues 134–147 (HSHPGYGCWLSGID). Positions 278–292 (NSSSKLKLKPTQPTT) are enriched in low complexity. Disordered regions lie at residues 278-333 (NSSS…SRIT) and 352-371 (TPLT…QGRY). Basic and acidic residues predominate over residues 293 to 313 (KGKETTEGSDKKLKKGEKEFS). Over residues 323–333 (NKVTQESSRIT) the composition is skewed to polar residues.

The protein belongs to the peptidase M67A family. CSN5 subfamily. In terms of assembly, component of the COP9 signalosome (CSN) complex.

It is found in the cytoplasm. The protein resides in the nucleus. Catalytic Component of the COP9 signalosome (CSN) complex that acts as an regulator of the ubiquitin (Ubl) conjugation pathway by mediating the deneddylation of the cullin subunit of SCF-type E3 ubiquitin-protein ligase complexes. This chain is COP9 signalosome complex subunit 5 (RRI1), found in Cryptococcus neoformans var. neoformans serotype D (strain B-3501A) (Filobasidiella neoformans).